Consider the following 214-residue polypeptide: Guanylate kinase (214 aa).

The Guanylate kinase-like domain occupies 12 to 191 (GLMLVMSSPS…SIAAVQAILA (180 aa)). Position 19–26 (19–26 (SPSGAGKT)) interacts with ATP.

The protein belongs to the guanylate kinase family.

Its subcellular location is the cytoplasm. The catalysed reaction is GMP + ATP = GDP + ADP. In terms of biological role, essential for recycling GMP and indirectly, cGMP. This Paramagnetospirillum magneticum (strain ATCC 700264 / AMB-1) (Magnetospirillum magneticum) protein is Guanylate kinase.